The chain runs to 209 residues: Ribosomal RNA large subunit methyltransferase E (209 aa).

S-adenosyl-L-methionine-binding residues include Gly-63, Trp-65, Asp-83, Asp-99, and Asp-124. Catalysis depends on Lys-164, which acts as the Proton acceptor.

Belongs to the class I-like SAM-binding methyltransferase superfamily. RNA methyltransferase RlmE family.

It localises to the cytoplasm. It catalyses the reaction uridine(2552) in 23S rRNA + S-adenosyl-L-methionine = 2'-O-methyluridine(2552) in 23S rRNA + S-adenosyl-L-homocysteine + H(+). Functionally, specifically methylates the uridine in position 2552 of 23S rRNA at the 2'-O position of the ribose in the fully assembled 50S ribosomal subunit. This chain is Ribosomal RNA large subunit methyltransferase E, found in Vibrio vulnificus (strain CMCP6).